We begin with the raw amino-acid sequence, 736 residues long: Myotubularin-related protein 12 (736 aa).

Residues 182 to 558 enclose the Myotubularin phosphatase domain; that stretch reads YLRSTNPEML…RQLSLPSSAF (377 aa). The disordered stretch occupies residues 672-691; it reads SLATQPDHPPPLHHRLPSFG.

Belongs to the protein-tyrosine phosphatase family. Non-receptor class myotubularin subfamily. In terms of assembly, heterodimer with lipid phosphatase mtm1. In skeletal muscles, the interaction stabilizes both mtmr12 and mtm1 protein levels.

It is found in the cytoplasm. The protein localises to the sarcoplasmic reticulum. The protein resides in the myofibril. It localises to the sarcomere. Its function is as follows. Acts as an adapter for the myotubularin phosphatase mtm1 to regulate mtm1 protein stability and possibly its intracellular location. By stabilizing mtm1 protein levels, required for skeletal muscle maintenance but not for myogenesis. In skeletal muscle cells, does not regulate mtm1 subcellular localization. The sequence is that of Myotubularin-related protein 12 (mtmr12) from Danio rerio (Zebrafish).